The following is a 321-amino-acid chain: tRNA U34 carboxymethyltransferase (321 aa).

Residues lysine 90, tryptophan 104, lysine 109, glycine 129, 151–153 (DPT), 180–181 (IE), methionine 195, tyrosine 199, and arginine 314 contribute to the carboxy-S-adenosyl-L-methionine site.

Belongs to the class I-like SAM-binding methyltransferase superfamily. CmoB family. In terms of assembly, homotetramer.

The catalysed reaction is carboxy-S-adenosyl-L-methionine + 5-hydroxyuridine(34) in tRNA = 5-carboxymethoxyuridine(34) in tRNA + S-adenosyl-L-homocysteine + H(+). Catalyzes carboxymethyl transfer from carboxy-S-adenosyl-L-methionine (Cx-SAM) to 5-hydroxyuridine (ho5U) to form 5-carboxymethoxyuridine (cmo5U) at position 34 in tRNAs. This is tRNA U34 carboxymethyltransferase from Histophilus somni (strain 129Pt) (Haemophilus somnus).